The primary structure comprises 103 residues: Large ribosomal subunit protein bL21 (103 aa).

Belongs to the bacterial ribosomal protein bL21 family. As to quaternary structure, part of the 50S ribosomal subunit. Contacts protein L20.

Functionally, this protein binds to 23S rRNA in the presence of protein L20. In Acidovorax sp. (strain JS42), this protein is Large ribosomal subunit protein bL21.